A 1163-amino-acid chain; its full sequence is Actin cross-linking toxin VgrG1 (1163 aa).

The ACD domain maps to 728-1163 (TPDFPTHFPK…NPQEWQRIIA (436 aa)). Position 739–743 (739–743 (SIGIE)) interacts with ATP. Mg(2+) is bound by residues E743 and E805. Residue S808 coordinates ATP. Q889 lines the Mg(2+) pocket. Position 995 (R995) interacts with ATP. E1066 is a binding site for Mg(2+).

The protein belongs to the VgrG protein family. As to quaternary structure, interacts with protein VC1417. Mg(2+) serves as cofactor.

Its subcellular location is the secreted. The protein localises to the host cytoplasm. It localises to the host cytosol. In terms of biological role, part of the type VI secretion system (T6SS) specialized secretion system, which delivers several virulence factors in both prokaryotic and eukaryotic cells during infection. Forms the spike at the tip of the elongating tube probably formed by hemolysin co-regulated protein/Hcp. Allows the delivery of the TseL antibacterial toxin to target cells where it exerts its toxicity. Also acts directly as an actin-directed toxin that catalyzes the covalent cross-linking of host cytoplasmic monomeric actin. Mediates the cross-link between 'Lys-50' of one monomer and 'Glu-270' of another actin monomer, resulting in formation of highly toxic actin oligomers that cause cell rounding. The toxin can be highly efficient at very low concentrations by acting on formin homology family proteins: toxic actin oligomers bind with high affinity to formins and adversely affect both nucleation and elongation abilities of formins, causing their potent inhibition in both profilin-dependent and independent manners. Acts as an acid--amino-acid ligase that transfers the gamma-phosphoryl group of ATP to the 'Glu-270' actin residue, resulting in the formation of an activated acyl phosphate intermediate. This intermediate is further hydrolyzed and the energy of hydrolysis is utilized for the formation of the amide bond between actin subunits. In Vibrio cholerae serotype O1 (strain ATCC 39315 / El Tor Inaba N16961), this protein is Actin cross-linking toxin VgrG1.